The primary structure comprises 400 residues: Exodeoxyribonuclease 7 large subunit (400 aa).

Belongs to the XseA family. Heterooligomer composed of large and small subunits.

Its subcellular location is the cytoplasm. It carries out the reaction Exonucleolytic cleavage in either 5'- to 3'- or 3'- to 5'-direction to yield nucleoside 5'-phosphates.. Its function is as follows. Bidirectionally degrades single-stranded DNA into large acid-insoluble oligonucleotides, which are then degraded further into small acid-soluble oligonucleotides. In Clostridium perfringens (strain ATCC 13124 / DSM 756 / JCM 1290 / NCIMB 6125 / NCTC 8237 / Type A), this protein is Exodeoxyribonuclease 7 large subunit.